The sequence spans 358 residues: Trans-anol O-methyltransferase 1 (358 aa).

S-adenosyl-L-methionine is bound by residues glycine 201, aspartate 224, aspartate 244, methionine 245, and arginine 259. The Proton acceptor role is filled by histidine 262.

This sequence belongs to the class I-like SAM-binding methyltransferase superfamily. Cation-independent O-methyltransferase family. COMT subfamily. In terms of tissue distribution, highly expressed in developing fruits. Expressed at low levels in roots, young leaves, buds and flowers.

It carries out the reaction (E)-anol + S-adenosyl-L-methionine = (E)-anethole + S-adenosyl-L-homocysteine + H(+). The catalysed reaction is (E)-isoeugenol + S-adenosyl-L-methionine = (E)-isomethyleugenol + S-adenosyl-L-homocysteine + H(+). It participates in aromatic compound metabolism; phenylpropanoid biosynthesis. Inhibited by zinc and copper. Phenylpropene O-methyltransferase that catalyzes the conversion of trans-anol to trans-anethole and isoeugenol to isomethyleugenol. Phenylpropenes are the primary constituents of various essential plant oils. They are produced as antimicrobial and antianimal compounds, or as floral attractants of pollinators. This is Trans-anol O-methyltransferase 1 (AIMT1) from Pimpinella anisum (Anise).